The sequence spans 177 residues: Transcription factor E (177 aa).

An HTH TFE/IIEalpha-type domain is found at 9 to 91 (VEELLNELVG…YWRINYDKAL (83 aa)).

This sequence belongs to the TFE family. In terms of assembly, monomer. Interaction with RNA polymerase subunits RpoF and RpoE is necessary for Tfe stimulatory transcription activity. Able to interact with Tbp and RNA polymerase in the absence of DNA promoter. Interacts both with the preinitiation and elongation complexes.

Transcription factor that plays a role in the activation of archaeal genes transcribed by RNA polymerase. Facilitates transcription initiation by enhancing TATA-box recognition by TATA-box-binding protein (Tbp), and transcription factor B (Tfb) and RNA polymerase recruitment. Not absolutely required for transcription in vitro, but particularly important in cases where Tbp or Tfb function is not optimal. It dynamically alters the nucleic acid-binding properties of RNA polymerases by stabilizing the initiation complex and destabilizing elongation complexes. Seems to translocate with the RNA polymerase following initiation and acts by binding to the non template strand of the transcription bubble in elongation complexes. The protein is Transcription factor E of Archaeoglobus fulgidus (strain ATCC 49558 / DSM 4304 / JCM 9628 / NBRC 100126 / VC-16).